Here is a 205-residue protein sequence, read N- to C-terminus: MTKIVRSKYKASRRLGVSLWGDSKDAFNTRNYRPGQHGQNTMIKTSDYGLHLKAKQRLKCHYGRVTEKQFRNIFALAQKMKGNTGENFIGLLESRLDTVVYRMNIAPTIFAARQLVSHGHIKLNGKKADIASIRLKEGDVIEVKESVKQIPLIQESVSKQAQTTPGYLSFDVPSLTGKYLRVPALSDVPYPFEAEVHLVIELYSR.

Residues 94–157 (SRLDTVVYRM…KQIPLIQESV (64 aa)) enclose the S4 RNA-binding domain.

The protein belongs to the universal ribosomal protein uS4 family. As to quaternary structure, part of the 30S ribosomal subunit. Contacts protein S5. The interaction surface between S4 and S5 is involved in control of translational fidelity.

One of the primary rRNA binding proteins, it binds directly to 16S rRNA where it nucleates assembly of the body of the 30S subunit. Functionally, with S5 and S12 plays an important role in translational accuracy. The sequence is that of Small ribosomal subunit protein uS4 from Rickettsia felis (strain ATCC VR-1525 / URRWXCal2) (Rickettsia azadi).